The following is a 153-amino-acid chain: Putative nuclear shuttle protein (153 aa).

Belongs to the nanoviridae nuclear shuttle protein family.

It is found in the host nucleus. The protein localises to the host cytoplasm. In terms of biological role, putative nuclear shuttle protein. The sequence is that of Putative nuclear shuttle protein (DNA-N) from Faba bean necrotic yellows virus (isolate Syrian SV292-88) (FBNYV).